Consider the following 67-residue polypeptide: Probable Sec-independent protein translocase protein TatE (67 aa).

Residues 1–21 traverse the membrane as a helical segment; it reads MEGISIAKLLIIGALIVLLFG. Residues 46 to 67 form a disordered region; that stretch reads EDTSATRTTAEDVPAERVVHKD.

It belongs to the TatA/E family. TatE subfamily.

The protein resides in the cell inner membrane. Functionally, part of the twin-arginine translocation (Tat) system that transports large folded proteins containing a characteristic twin-arginine motif in their signal peptide across membranes. TatE shares overlapping functions with TatA. The sequence is that of Probable Sec-independent protein translocase protein TatE from Pantoea vagans (strain C9-1) (Pantoea agglomerans (strain C9-1)).